Here is a 782-residue protein sequence, read N- to C-terminus: General transcription and DNA repair factor IIH helicase/translocase subunit XPB (782 aa).

Residues 1–11 (MGKRDRADREK) show a composition bias toward basic and acidic residues. Residues 1–51 (MGKRDRADREKKKSKKRHYEDEEDEEDDAPGNDTQEAVPSAAGKQVDESGT) form a disordered region. The Nuclear localization signal motif lies at 6-18 (RADREKKKSKKRH). Over residues 21-30 (DEEDEEDDAP) the composition is skewed to acidic residues. Residues 327-488 (MFGNGRARSG…DLNFLIGPKL (162 aa)) enclose the Helicase ATP-binding domain. 340–347 (LPCGAGKS) provides a ligand contact to ATP. Residues 441–444 (DEVH) carry the DEVH box motif. The Helicase C-terminal domain maps to 542–702 (RACQFLIKFH…LAGMEEEDLA (161 aa)). At S686 the chain carries Phosphoserine. S751 carries the phosphoserine; by CK2 modification.

This sequence belongs to the helicase family. RAD25/XPB subfamily. Component of the 7-subunit TFIIH core complex composed of XPB/ERCC3, XPD/ERCC2, GTF2H1, GTF2H2, GTF2H3, GTF2H4 and GTF2H5, which is active in NER. The core complex associates with the 3-subunit CDK-activating kinase (CAK) module composed of CCNH/cyclin H, CDK7 and MNAT1 to form the 10-subunit holoenzyme (holo-TFIIH) active in transcription. Interacts with PUF60. Interacts with ATF7IP. Interacts with KAT2A; leading to KAT2A recruitment to promoters and acetylation of histones. Part of TBP-based Pol II pre-initiation complex (PIC), in which Pol II core assembles with general transcription factors and other specific initiation factors including GTF2E1, GTF2E2, GTF2F1, GTF2F2, TCEA1, ERCC2, ERCC3, GTF2H2, GTF2H3, GTF2H4, GTF2H5, GTF2A1, GTF2A2, GTF2B and TBP; this large multi-subunit PIC complex mediates DNA unwinding and targets Pol II core to the transcription start site where the first phosphodiester bond forms. Post-translationally, phosphorylation on Ser-751 by CK2 controls the 5'-excision activity of ERCC1-XPF endonuclease; phosphorylated protein inhibits the excision activity and thus NER. Dephosphorylation reactivates the 5'-excision step. Phosphorylation has no effect on transcription or the 3'-5' helicase activity.

Its subcellular location is the nucleus. It catalyses the reaction Couples ATP hydrolysis with the unwinding of duplex DNA by translocating in the 3'-5' direction.. The enzyme catalyses ATP + H2O = ADP + phosphate + H(+). Its activity is regulated as follows. Phosphorylation on Ser-751 by CK2 controls the 5'-excision activity of ERCC1-XPF endonuclease; phosphorylated protein inhibits the excision activity and thus NER. ATPase activity is stimulated by TFIIH subunit p52 (GTF2H4). DNA translocase activity by this subunit in TFIIH is stimulated by XPA, ERCC5/XPG and XFP plus ERCC1. ATP-dependent 3'-5' DNA helicase/translocase; binds dsDNA rather than ssDNA, unzipping it in a translocase rather than classical helicase activity. Component of the general transcription and DNA repair factor IIH (TFIIH) core complex. When complexed to CDK-activating kinase (CAK), involved in RNA transcription by RNA polymerase II. The ATPase activity of XPB/ERCC3, but not its helicase activity, is required for DNA opening; it may wrap around the damaged DNA wedging it open, causing localized melting and twisting that allows XPD/ERCC2 helicase to anchor. The ATP-dependent helicase activity of XPB/ERCC3 may be required for promoter escape. Also involved in transcription-coupled nucleotide excision repair (NER) of damaged DNA. In NER, TFIIH acts by opening DNA around the lesion to allow the excision of the damaged oligonucleotide and its replacement by a new DNA fragment. The structure of the TFIIH transcription complex differs from the NER-TFIIH complex; large movements by XPD/ERCC2 and XPB/ERCC3 are stabilized by XPA. This is General transcription and DNA repair factor IIH helicase/translocase subunit XPB (ERCC3) from Bos taurus (Bovine).